The following is a 378-amino-acid chain: Succinyl-diaminopimelate desuccinylase (378 aa).

Position 68 (His68) interacts with Zn(2+). The active site involves Asp70. Asp101 serves as a coordination point for Zn(2+). Glu135 functions as the Proton acceptor in the catalytic mechanism. Zn(2+) contacts are provided by Glu136, Glu164, and His350.

The protein belongs to the peptidase M20A family. DapE subfamily. Homodimer. Zn(2+) is required as a cofactor. It depends on Co(2+) as a cofactor.

The enzyme catalyses N-succinyl-(2S,6S)-2,6-diaminopimelate + H2O = (2S,6S)-2,6-diaminopimelate + succinate. Its pathway is amino-acid biosynthesis; L-lysine biosynthesis via DAP pathway; LL-2,6-diaminopimelate from (S)-tetrahydrodipicolinate (succinylase route): step 3/3. Catalyzes the hydrolysis of N-succinyl-L,L-diaminopimelic acid (SDAP), forming succinate and LL-2,6-diaminopimelate (DAP), an intermediate involved in the bacterial biosynthesis of lysine and meso-diaminopimelic acid, an essential component of bacterial cell walls. This Vibrio atlanticus (strain LGP32) (Vibrio splendidus (strain Mel32)) protein is Succinyl-diaminopimelate desuccinylase.